Here is a 375-residue protein sequence, read N- to C-terminus: Deoxyribonuclease-2 (375 aa).

An N-terminal signal peptide occupies residues Met1 to Ala21. Residue Asn131 is glycosylated (N-linked (GlcNAc...) asparagine).

It belongs to the DNase II family.

It catalyses the reaction Endonucleolytic cleavage to nucleoside 3'-phosphates and 3'-phosphooligonucleotide end-products.. In terms of biological role, hydrolyzes DNA under acidic conditions with a preference for double-stranded DNA. Implicated in apoptosis. The protein is Deoxyribonuclease-2 (nuc-1) of Caenorhabditis elegans.